Consider the following 194-residue polypeptide: Isopentenyl-diphosphate Delta-isomerase (194 aa).

Mn(2+) is bound by residues His-35 and His-42. A Nudix hydrolase domain is found at 40 to 174; that stretch reads PLHLAFSSYL…PWALSPWSVD (135 aa). Residue Cys-77 is part of the active site. His-79 contacts Mn(2+). A Mg(2+)-binding site is contributed by Glu-97. 2 residues coordinate Mn(2+): Glu-124 and Glu-126. The active site involves Glu-126.

This sequence belongs to the IPP isomerase type 1 family. Mg(2+) is required as a cofactor. The cofactor is Mn(2+).

It localises to the cytoplasm. It carries out the reaction isopentenyl diphosphate = dimethylallyl diphosphate. The protein operates within isoprenoid biosynthesis; dimethylallyl diphosphate biosynthesis; dimethylallyl diphosphate from isopentenyl diphosphate: step 1/1. In terms of biological role, catalyzes the 1,3-allylic rearrangement of the homoallylic substrate isopentenyl (IPP) to its highly electrophilic allylic isomer, dimethylallyl diphosphate (DMAPP). The sequence is that of Isopentenyl-diphosphate Delta-isomerase from Frankia alni (strain DSM 45986 / CECT 9034 / ACN14a).